An 856-amino-acid polypeptide reads, in one-letter code: DNA mismatch repair protein MutS (856 aa).

609–616 serves as a coordination point for ATP; it reads GPNMSGKS.

It belongs to the DNA mismatch repair MutS family.

Its function is as follows. This protein is involved in the repair of mismatches in DNA. It is possible that it carries out the mismatch recognition step. This protein has a weak ATPase activity. This Finegoldia magna (strain ATCC 29328 / DSM 20472 / WAL 2508) (Peptostreptococcus magnus) protein is DNA mismatch repair protein MutS.